Here is a 62-residue protein sequence, read N- to C-terminus: Sec-independent protein translocase protein TatA (62 aa).

Residues 1 to 21 (MFGIGIPELLVIFVLILLVFG) form a helical membrane-spanning segment.

The protein belongs to the TatA/E family. In terms of assembly, the Tat system comprises two distinct complexes: a TatABC complex, containing multiple copies of TatA, TatB and TatC subunits, and a separate TatA complex, containing only TatA subunits. Substrates initially bind to the TatABC complex, which probably triggers association of the separate TatA complex to form the active translocon.

The protein resides in the cell inner membrane. Part of the twin-arginine translocation (Tat) system that transports large folded proteins containing a characteristic twin-arginine motif in their signal peptide across membranes. TatA could form the protein-conducting channel of the Tat system. This is Sec-independent protein translocase protein TatA from Oleidesulfovibrio alaskensis (strain ATCC BAA-1058 / DSM 17464 / G20) (Desulfovibrio alaskensis).